Consider the following 374-residue polypeptide: MANKVIKCKAAVAWEAGKPLSIEEIEVAPPKAHEVRIKIFATAVCHTDAYTLSGADPEGCFPVILGHEGAGIVESVGEGVTNLKAGDTVIPLYIPQCGECKFCLNPKTNLCQKIRVTQGKGLMPDGTSRFTCKGKTILHYMGTSTFSEYTVVADISVAKIDPSAPLDKVCLLGCGISTGYGAALNTAKVEPGSTCAVFGLGGVGLAAIMGCKAAGASRIIAVDINKDKFARAKEFGATECINPQDFSKPIQEVLVEKTDGGVDYSFECIGNVKVMRAALEACHKGWGVSVVVGVAGAGEEISTRPFQLVTGRTWKGTAFGGWKSVESVPKLVSEYMSKKINVDEFVTNTLSFDQINEAFELMHSGKSIRTVVKI.

Ala-2 bears the N-acetylalanine mark. Cys-45, His-67, Cys-97, Cys-100, Cys-103, Cys-111, and Cys-174 together coordinate Zn(2+). Lys-233 bears the N6-succinyllysine mark. Phosphoserine is present on Ser-247. Lys-315 bears the N6-succinyllysine mark. Phosphoserine is present on residues Ser-324 and Ser-351.

This sequence belongs to the zinc-containing alcohol dehydrogenase family. Class-III subfamily. In terms of assembly, homodimer. The cofactor is Zn(2+).

Its subcellular location is the cytoplasm. It carries out the reaction a primary alcohol + NAD(+) = an aldehyde + NADH + H(+). It catalyses the reaction a secondary alcohol + NAD(+) = a ketone + NADH + H(+). The enzyme catalyses S-(hydroxymethyl)glutathione + NADP(+) = S-formylglutathione + NADPH + H(+). The catalysed reaction is S-(hydroxymethyl)glutathione + NAD(+) = S-formylglutathione + NADH + H(+). It carries out the reaction 20-oxo-(5Z,8Z,11Z,14Z)-eicosatetraenoate + NAD(+) + H2O = (5Z,8Z,11Z,14Z)-eicosatetraenedioate + NADH + 2 H(+). It catalyses the reaction 20-hydroxy-(5Z,8Z,11Z,14Z)-eicosatetraenoate + NAD(+) = 20-oxo-(5Z,8Z,11Z,14Z)-eicosatetraenoate + NADH + H(+). The enzyme catalyses S-nitrosoglutathione + NADH + H(+) = S-(hydroxysulfenamide)glutathione + NAD(+). Its function is as follows. Catalyzes the oxidation of long-chain primary alcohols and the oxidation of S-(hydroxymethyl) glutathione. Also oxidizes long chain omega-hydroxy fatty acids, such as 20-HETE, producing both the intermediate aldehyde, 20-oxoarachidonate and the end product, a dicarboxylic acid, (5Z,8Z,11Z,14Z)-eicosatetraenedioate. Class-III ADH is remarkably ineffective in oxidizing ethanol. Required for clearance of cellular formaldehyde, a cytotoxic and carcinogenic metabolite that induces DNA damage. Also acts as a S-nitroso-glutathione reductase by catalyzing the NADH-dependent reduction of S-nitrosoglutathione, thereby regulating protein S-nitrosylation. In Oryctolagus cuniculus (Rabbit), this protein is Alcohol dehydrogenase class-3.